A 358-amino-acid polypeptide reads, in one-letter code: MLENRVKTKQIFIGGVAIGGGAPISTQSMTFSKTADIQSTKNQIDRLKLAGADLVRVAVSNEKDALALKELKKVSPLPLIADIHFHYKFALIAAQSVDAIRINPGNIGSKDKIKAVVDACKEKNIPIRIGVNAGSLEKQFDQKYGPTVKGMVESALYNAKLLEDLDFTNFKISLKASDVIRTIEAYRMLRPLVIYPFHLGVTEAGNLFSSSIKSAMALGGLLMEGIGDTMRISITGELENEIKVARAILRYSGRLKEGINLISCPTCGRIEANLVDMAGKVEKRLSHIKTPLDISVMGCVVNALGEAKHADMAIAFGNRSGLIIKEGKVIHKLAEKDLFETFVTEVENLAKEREKTLN.

Positions 264, 267, 299, and 306 each coordinate [4Fe-4S] cluster.

It belongs to the IspG family. The cofactor is [4Fe-4S] cluster.

The enzyme catalyses (2E)-4-hydroxy-3-methylbut-2-enyl diphosphate + oxidized [flavodoxin] + H2O + 2 H(+) = 2-C-methyl-D-erythritol 2,4-cyclic diphosphate + reduced [flavodoxin]. Its pathway is isoprenoid biosynthesis; isopentenyl diphosphate biosynthesis via DXP pathway; isopentenyl diphosphate from 1-deoxy-D-xylulose 5-phosphate: step 5/6. Its function is as follows. Converts 2C-methyl-D-erythritol 2,4-cyclodiphosphate (ME-2,4cPP) into 1-hydroxy-2-methyl-2-(E)-butenyl 4-diphosphate. This Helicobacter acinonychis (strain Sheeba) protein is 4-hydroxy-3-methylbut-2-en-1-yl diphosphate synthase (flavodoxin).